Here is a 137-residue protein sequence, read N- to C-terminus: Large ribosomal subunit protein uL16 (137 aa).

This sequence belongs to the universal ribosomal protein uL16 family. As to quaternary structure, part of the 50S ribosomal subunit.

In terms of biological role, binds 23S rRNA and is also seen to make contacts with the A and possibly P site tRNAs. The protein is Large ribosomal subunit protein uL16 of Mycoplasma capricolum subsp. capricolum (strain California kid / ATCC 27343 / NCTC 10154).